We begin with the raw amino-acid sequence, 33 residues long: Brevinin-2HSb (33 aa).

Cysteines 27 and 33 form a disulfide.

Expressed by the skin glands.

Its subcellular location is the secreted. Functionally, has antibacterial activity against the Gram-positive bacterium S.aureus ATCC 25923 and the Gram-negative bacterium E.coli ATCC 25726. This Odorrana hosii (Hose's rock frog) protein is Brevinin-2HSb.